A 37-amino-acid polypeptide reads, in one-letter code: Photosystem II reaction center protein M (37 aa).

Residues 5 to 25 (ILAFIATALFILVPTAFLLII) traverse the membrane as a helical segment.

The protein belongs to the PsbM family. PSII is composed of 1 copy each of membrane proteins PsbA, PsbB, PsbC, PsbD, PsbE, PsbF, PsbH, PsbI, PsbJ, PsbK, PsbL, PsbM, PsbT, PsbX, PsbY, PsbZ, Psb30/Ycf12, at least 3 peripheral proteins of the oxygen-evolving complex and a large number of cofactors. It forms dimeric complexes.

It localises to the plastid. The protein resides in the chloroplast thylakoid membrane. Functionally, one of the components of the core complex of photosystem II (PSII). PSII is a light-driven water:plastoquinone oxidoreductase that uses light energy to abstract electrons from H(2)O, generating O(2) and a proton gradient subsequently used for ATP formation. It consists of a core antenna complex that captures photons, and an electron transfer chain that converts photonic excitation into a charge separation. This subunit is found at the monomer-monomer interface. This chain is Photosystem II reaction center protein M, found in Pelargonium hortorum (Common geranium).